A 306-amino-acid chain; its full sequence is Glutaminase (306 aa).

Substrate is bound by residues Ser-64, Asn-115, Glu-159, Asn-166, Tyr-190, Tyr-242, and Val-260.

Belongs to the glutaminase family. As to quaternary structure, homotetramer.

The catalysed reaction is L-glutamine + H2O = L-glutamate + NH4(+). In Vibrio atlanticus (strain LGP32) (Vibrio splendidus (strain Mel32)), this protein is Glutaminase.